The primary structure comprises 155 residues: MMLPDWKIRKEILIEPFSEESLQPAGYDLRVGGEAYVNGKILDVKDSGGVTIPPKTYALVLTLERIKLPDDVMGDMKLRSSLAREGLIGSFAWVDPGWDGNLTLALFNASNESVELKYGERFVQIAFIRLEGPAKNPYRGNYQGSKHLALSKRKR.

Residues 79 to 84, D95, Q124, and Y138 each bind dCTP; that span reads RSSLAR.

The protein belongs to the dCTP deaminase family. As to quaternary structure, homotrimer.

It catalyses the reaction dCTP + H2O + H(+) = dUTP + NH4(+). It participates in pyrimidine metabolism; dUMP biosynthesis; dUMP from dCTP (dUTP route): step 1/2. Functionally, catalyzes the deamination of dCTP to dUTP. In Thermococcus kodakarensis (strain ATCC BAA-918 / JCM 12380 / KOD1) (Pyrococcus kodakaraensis (strain KOD1)), this protein is dCTP deaminase.